The following is a 636-amino-acid chain: Protein meg-1 (636 aa).

Composition is skewed to polar residues over residues 1 to 13 (MDNR…NGNF), 38 to 54 (SSGN…NQQQ), and 292 to 355 (LSMN…QYNH). 4 disordered regions span residues 1–54 (MDNR…NQQQ), 289–367 (LFNL…APHL), 484–504 (SDVA…SMYI), and 521–542 (LDSS…KTPS). Serine 574 is subject to Phosphoserine; by mbk-2. The interval 591 to 636 (MSQSFLHQQDDEAPDCTKNVHSESDLKQAEPQESDKQSDKELPSNE) is disordered. The span at 608–636 (KNVHSESDLKQAEPQESDKQSDKELPSNE) shows a compositional bias: basic and acidic residues.

As to quaternary structure, interacts with pptr-1, pptr-2 and pgl-1. Post-translationally, phosphorylated by mbk-2, which promotes the disassembly of zygotic P granules in the anterior cytoplasm of pre-gastrulation embryos. Dephosphorylated by a phosphatase complex containing the PP2A regulatory subunit pptr-1, which promotes the assembly and accumulation of zygotic P granules in the posterior cytoplasm of pre-gastrulation embryos. In terms of tissue distribution, not expressed in the adult germline or in any somatic tissues.

Its subcellular location is the cytoplasmic granule. P granule component, which acts redundantly with P granule component meg-2 to promote P granule segregation during embryogenesis, and germ cell proliferation and differentiation in larval stages. In its phosphorylated form, and together with meg-2, promotes the disassembly of zygotic P granules in the anterior cytoplasm of pre-gastrulation embryos. In its dephosphorylated form, and together with meg-2, promotes the assembly and accumulation of zygotic P granules in the posterior cytoplasm of pre-gastrulation embryos. May function with the nanos family members nos-2 and nos-3 to promote germ cell proliferation during larval development. Required for fertility. This Caenorhabditis elegans protein is Protein meg-1.